Consider the following 111-residue polypeptide: Prostate and testis expressed protein 2 (111 aa).

The N-terminal stretch at 1 to 18 is a signal peptide; that stretch reads MFVLVMICLFCQYWGVLN. Residues 27–108 enclose the UPAR/Ly6 domain; sequence LLCYKCKKYH…CKHSNYCNLP (82 aa). Intrachain disulfides connect C29-C55, C32-C40, C47-C78, and C82-C99.

This sequence belongs to the PATE family. Expressed in prostate, testis, brain and lung.

It localises to the secreted. The chain is Prostate and testis expressed protein 2 (Pate2) from Mus musculus (Mouse).